The following is a 256-amino-acid chain: DNA repair protein RecO (256 aa).

Belongs to the RecO family.

In terms of biological role, involved in DNA repair and RecF pathway recombination. The sequence is that of DNA repair protein RecO from Bacillus pumilus (strain SAFR-032).